A 780-amino-acid polypeptide reads, in one-letter code: LPS-assembly protein LptD (780 aa).

The N-terminal stretch at 1-24 (MKKRFPTLLATLIWTALYSQHTLA) is a signal peptide.

It belongs to the LptD family. Component of the lipopolysaccharide transport and assembly complex. Interacts with LptE and LptA.

The protein resides in the cell outer membrane. Its function is as follows. Together with LptE, is involved in the assembly of lipopolysaccharide (LPS) at the surface of the outer membrane. The chain is LPS-assembly protein LptD from Yersinia pseudotuberculosis serotype I (strain IP32953).